Here is a 468-residue protein sequence, read N- to C-terminus: GDNF family receptor alpha-1 (468 aa).

A signal peptide spans 1-24; that stretch reads MFLATLYFALPLLDLLMSAEVSGG. Repeat copies occupy residues 25–113, 150–238, and 239–342. Cys36 and Cys42 form a disulfide bridge. N-linked (GlcNAc...) asparagine glycosylation is present at Asn59. 10 disulfides stabilise this stretch: Cys154/Cys214, Cys161/Cys167, Cys178/Cys192, Cys187/Cys233, Cys216/Cys221, Cys243/Cys313, Cys250/Cys256, Cys267/Cys285, Cys277/Cys337, and Cys315/Cys325. Asn347 and Asn406 each carry an N-linked (GlcNAc...) asparagine glycan. The GPI-anchor amidated serine moiety is linked to residue Ser430. Positions 431–468 are cleaved as a propeptide — removed in mature form; the sequence is HITTKSMAAPPSCSLSSLPVLMLTALAALLSVSLAETS.

The protein belongs to the GDNFR family. As to quaternary structure, interacts with GDNF ligand and RET: forms a 2:2:2 ternary complex composed of GDNF ligand, GFRA1 and RET receptor. Interacts with SORL1, either alone or in complex with GDNF. Interaction between SORL1 and GFRA1 leads to GFRA1 internalization, but not degradation. In terms of tissue distribution, expressed in liver, brain, kidney and cochlea.

Its subcellular location is the cell membrane. The protein resides in the golgi apparatus. It localises to the trans-Golgi network. The protein localises to the endosome. It is found in the multivesicular body. Coreceptor for GDNF, a neurotrophic factor that enhances survival and morphological differentiation of dopaminergic neurons and increases their high-affinity dopamine uptake. GDNF-binding leads to autophosphorylation and activation of the RET receptor. The chain is GDNF family receptor alpha-1 (Gfra1) from Rattus norvegicus (Rat).